The following is a 105-amino-acid chain: Sec-independent protein translocase protein TatA (105 aa).

A helical membrane pass occupies residues 1–21; the sequence is MSLGPWEIGIIVLLIIVLFGA. Basic and acidic residues predominate over residues 41-50; the sequence is EVKEMNKDGD. The interval 41–105 is disordered; sequence EVKEMNKDGD…QNYEDPNRTS (65 aa). Positions 52 to 92 are enriched in low complexity; the sequence is PEQQQQPQQQIAPNQIEAPQPNFEQHYQGQQVQQPQNPQTP. Residues 96–105 show a composition bias toward basic and acidic residues; it reads QNYEDPNRTS.

Belongs to the TatA/E family. In terms of assembly, the Tat system comprises two distinct complexes: a TatABC complex, containing multiple copies of TatA, TatB and TatC subunits, and a separate TatA complex, containing only TatA subunits. Substrates initially bind to the TatABC complex, which probably triggers association of the separate TatA complex to form the active translocon.

It localises to the cell membrane. Its function is as follows. Part of the twin-arginine translocation (Tat) system that transports large folded proteins containing a characteristic twin-arginine motif in their signal peptide across membranes. TatA could form the protein-conducting channel of the Tat system. The protein is Sec-independent protein translocase protein TatA of Corynebacterium glutamicum (strain ATCC 13032 / DSM 20300 / JCM 1318 / BCRC 11384 / CCUG 27702 / LMG 3730 / NBRC 12168 / NCIMB 10025 / NRRL B-2784 / 534).